Here is a 174-residue protein sequence, read N- to C-terminus: Large ribosomal subunit protein uL10 (174 aa).

The protein belongs to the universal ribosomal protein uL10 family. As to quaternary structure, part of the ribosomal stalk of the 50S ribosomal subunit. The N-terminus interacts with L11 and the large rRNA to form the base of the stalk. The C-terminus forms an elongated spine to which L12 dimers bind in a sequential fashion forming a multimeric L10(L12)X complex.

Its function is as follows. Forms part of the ribosomal stalk, playing a central role in the interaction of the ribosome with GTP-bound translation factors. In Geobacter metallireducens (strain ATCC 53774 / DSM 7210 / GS-15), this protein is Large ribosomal subunit protein uL10.